The sequence spans 316 residues: Probable porphobilinogen deaminase (316 aa).

An S-(dipyrrolylmethanemethyl)cysteine modification is found at C234.

It belongs to the HMBS family. It depends on dipyrromethane as a cofactor.

It catalyses the reaction 4 porphobilinogen + H2O = hydroxymethylbilane + 4 NH4(+). It participates in porphyrin-containing compound metabolism; protoporphyrin-IX biosynthesis; coproporphyrinogen-III from 5-aminolevulinate: step 2/4. Its function is as follows. Tetrapolymerization of the monopyrrole PBG into the hydroxymethylbilane pre-uroporphyrinogen in several discrete steps. This is Probable porphobilinogen deaminase from Methanosarcina barkeri (strain Fusaro / DSM 804).